The chain runs to 80 residues: Peptide LaIT2 (80 aa).

A signal peptide spans 1-21 (MAKHLIVMFLVIMVISSLVDC). Residues 49–80 (QYGCPIISNMCEDHCRRKKMEGQCDLLDCVCS) enclose the BetaSPN-type CS-alpha/beta domain. Disulfide bonds link Cys52–Cys72, Cys59–Cys77, and Cys63–Cys79.

This sequence belongs to the long chain scorpion toxin family. Class 2 subfamily. As to expression, expressed by the venom gland.

It localises to the secreted. Functionally, dual-function toxin that acts both as an insecticidal and an antimicrobial peptide. May inhibit voltage-gated potassium channels (Kv). This amphipathic peptide causes significant antimicrobial activity against E.coli (MIC=7 uM) but does not show any activity against S.aureus even at high concentration. In vivo, causes paralysis or death to crickets. The sequence is that of Peptide LaIT2 from Liocheles australasiae (Dwarf wood scorpion).